The sequence spans 167 residues: Transcriptional regulator MraZ (167 aa).

2 SpoVT-AbrB domains span residues E8–H51 and S92–T135.

The protein belongs to the MraZ family. Forms oligomers.

The protein resides in the cytoplasm. It is found in the nucleoid. The chain is Transcriptional regulator MraZ from Ruegeria pomeroyi (strain ATCC 700808 / DSM 15171 / DSS-3) (Silicibacter pomeroyi).